Reading from the N-terminus, the 392-residue chain is Putative cystathionine gamma-lyase 2 (392 aa).

The disordered stretch occupies residues Leu32–Pro55. A compositionally biased stretch (basic and acidic residues) spans Asn40–Ser50. Substrate is bound by residues Arg51, Tyr103, and Arg108. Residue Lys203 is modified to N6-(pyridoxal phosphate)lysine. Glu330 contributes to the substrate binding site.

Belongs to the trans-sulfuration enzymes family. Requires pyridoxal 5'-phosphate as cofactor.

The protein localises to the cytoplasm. It catalyses the reaction L,L-cystathionine + H2O = 2-oxobutanoate + L-cysteine + NH4(+). It participates in amino-acid biosynthesis; L-cysteine biosynthesis; L-cysteine from L-homocysteine and L-serine: step 2/2. The sequence is that of Putative cystathionine gamma-lyase 2 (cth-2) from Caenorhabditis elegans.